The chain runs to 420 residues: COP9 signalosome complex subunit 11 (420 aa).

Residues 177–346 (SIHEHPSLVD…VYYKEDLPVG (170 aa)) enclose the PCI domain. Residues 386-420 (VEPLNRSQDMDAFELHEQSEDEEYEEEHLEEGENV) form a disordered region. Positions 404–420 (SEDEEYEEEHLEEGENV) are enriched in acidic residues.

In terms of assembly, component of a COP9 signalosome-like (CSN) complex.

The protein localises to the cytoplasm. It is found in the nucleus. In terms of biological role, component of the COP9 signalosome (CSN) complex that acts as an regulator of the ubiquitin (Ubl) conjugation pathway by mediating the deneddylation of the cullin subunit of SCF-type E3 ubiquitin-protein ligase complexes The CSN complex is involved in the regulation of the mating pheromone response. PCI8 may also be involved in transcriptional and translational control. This Eremothecium gossypii (strain ATCC 10895 / CBS 109.51 / FGSC 9923 / NRRL Y-1056) (Yeast) protein is COP9 signalosome complex subunit 11 (PCI8).